A 437-amino-acid chain; its full sequence is Phenylacetate-coenzyme A ligase (437 aa).

The protein belongs to the phenylacetyl-CoA ligase family. In terms of assembly, monomer.

It carries out the reaction 2-phenylacetate + ATP + CoA = phenylacetyl-CoA + AMP + diphosphate. It participates in aromatic compound metabolism; phenylacetate degradation. In terms of biological role, catalyzes the activation of phenylacetic acid (PA) to phenylacetyl-CoA (PA-CoA). This is Phenylacetate-coenzyme A ligase (paaK) from Escherichia coli (strain K12).